Here is an 80-residue protein sequence, read N- to C-terminus: Protein CEBPZOS (80 aa).

Residues 15 to 32 (GVLVAELVGVFGAYFLFS) traverse the membrane as a helical segment.

Its subcellular location is the mitochondrion membrane. This Homo sapiens (Human) protein is Protein CEBPZOS.